The sequence spans 930 residues: Carnosine synthase 1 (930 aa).

The interval 1–24 (MISVDRLSEEQALGMKEQEWAGPE) is disordered. The region spanning 624-825 (RPPPAAFSVP…LLLAAVLLAL (202 aa)) is the ATP-grasp domain. 650–716 (VPFPAVAKLE…MEYVPGTEHD (67 aa)) contributes to the ATP binding site. Residues E782, E794, and N796 each coordinate Mg(2+). Mn(2+) contacts are provided by E782, E794, and N796.

As to quaternary structure, homotetramer. Mg(2+) serves as cofactor. The cofactor is Mn(2+).

It catalyses the reaction beta-alanine + L-histidine + ATP = carnosine + ADP + phosphate + H(+). It carries out the reaction 4-aminobutanoate + L-histidine + ATP = L-homocarnosine + ADP + phosphate + H(+). In terms of biological role, catalyzes the synthesis of carnosine and homocarnosine. Carnosine is synthesized more efficiently than homocarnosine. In Gallus gallus (Chicken), this protein is Carnosine synthase 1.